Here is a 1246-residue protein sequence, read N- to C-terminus: Myosin-1 (1246 aa).

The interval 1–41 (MGHSRRPVGGEKKSRGFGRSKAVADVGDGRQTGGKPQVKKA) is disordered. Positions 51 to 730 (IGVSDLTLLS…TLFALEAMRD (680 aa)) constitute a Myosin motor domain. 144 to 151 (GESGAGKT) provides a ligand contact to ATP. Serine 372 carries the post-translational modification Phosphoserine. Residues 419–501 (SIGILDIYGF…PGVFAALNDA (83 aa)) are actin-binding. 2 IQ domains span residues 734–754 (HNMAIRIQRAWRNYLRYRIEC) and 755–780 (AIRIQRFWRRMTGGLELIKVRDQGHK). Residues 788–976 (RRRMSLLGSR…TIHTSAGEPP (189 aa)) enclose the TH1 domain. A compositionally biased stretch (polar residues) spans 956 to 970 (GSSNVDTYKSSTIHT). 2 disordered regions span residues 956 to 1080 (GSSN…PKKP) and 1127 to 1246 (WTPQ…DDEW). 2 stretches are compositionally biased toward pro residues: residues 1033 to 1045 (APQPAAVPRPVPQ) and 1065 to 1078 (APPPPPPVSPPAPK). An SH3 domain is found at 1077–1138 (PKKPMAKVLY…PQAYLEEQKA (62 aa)). 2 stretches are compositionally biased toward low complexity: residues 1151 to 1166 (TPATNGTATAAAAKAK) and 1214 to 1228 (NSASNASLAGGLAEA). Residues 1229–1240 (LRQRQEAMHGKQ) are compositionally biased toward basic and acidic residues.

It belongs to the TRAFAC class myosin-kinesin ATPase superfamily. Myosin family. Post-translationally, phosphorylation of the TEDS site (Ser-372) is required for the polarization of the actin cytoskeleton. Phosphorylation probably activates the myosin-I ATPase activity.

The protein localises to the cytoplasm. It is found in the cytoskeleton. Its subcellular location is the actin patch. Functionally, type-I myosin implicated in the organization of the actin cytoskeleton. Required for proper actin cytoskeleton polarization. At the cell cortex, assembles in patch-like structures together with proteins from the actin-polymerizing machinery and promotes actin assembly. Functions as actin nucleation-promoting factor (NPF) for the Arp2/3 complex. Plays an important role in polarized growth, spore germination, hyphal morphogenesis, and septal wall formation. The protein is Myosin-1 (myoA) of Aspergillus terreus (strain NIH 2624 / FGSC A1156).